The sequence spans 226 residues: Uracil-DNA glycosylase (226 aa).

Aspartate 64 serves as the catalytic Proton acceptor.

It belongs to the uracil-DNA glycosylase (UDG) superfamily. UNG family.

The protein resides in the cytoplasm. The catalysed reaction is Hydrolyzes single-stranded DNA or mismatched double-stranded DNA and polynucleotides, releasing free uracil.. Functionally, excises uracil residues from the DNA which can arise as a result of misincorporation of dUMP residues by DNA polymerase or due to deamination of cytosine. The protein is Uracil-DNA glycosylase of Photorhabdus laumondii subsp. laumondii (strain DSM 15139 / CIP 105565 / TT01) (Photorhabdus luminescens subsp. laumondii).